We begin with the raw amino-acid sequence, 212 residues long: uncharacterized protein (212 aa).

This is an uncharacterized protein from Dryophytes versicolor (chameleon treefrog).